A 318-amino-acid polypeptide reads, in one-letter code: N-acetyl-gamma-glutamyl-phosphate reductase (318 aa).

Cys-132 is an active-site residue.

The protein belongs to the NAGSA dehydrogenase family. Type 1 subfamily.

The protein resides in the cytoplasm. The enzyme catalyses N-acetyl-L-glutamate 5-semialdehyde + phosphate + NADP(+) = N-acetyl-L-glutamyl 5-phosphate + NADPH + H(+). Its pathway is amino-acid biosynthesis; L-arginine biosynthesis; N(2)-acetyl-L-ornithine from L-glutamate: step 3/4. Its function is as follows. Catalyzes the NADPH-dependent reduction of N-acetyl-5-glutamyl phosphate to yield N-acetyl-L-glutamate 5-semialdehyde. This is N-acetyl-gamma-glutamyl-phosphate reductase from Azobacteroides pseudotrichonymphae genomovar. CFP2.